Reading from the N-terminus, the 206-residue chain is Large ribosomal subunit protein mL62 (206 aa).

Residues 1–29 (MAAARCLRWGLSRAEAWLLPPPTSCCHRA) constitute a mitochondrion transit peptide. Gln90 carries the N5-methylglutamine modification.

Belongs to the prokaryotic/mitochondrial release factor family. Mitochondrion-specific ribosomal protein mL62 subfamily. In terms of assembly, component of the mitochondrial ribosome large subunit (39S) which comprises a 16S rRNA and about 50 distinct proteins. Post-translationally, methylation of glutamine in the GGQ triplet by HEMK1.

It localises to the mitochondrion. The enzyme catalyses an N-acyl-L-alpha-aminoacyl-tRNA + H2O = an N-acyl-L-amino acid + a tRNA + H(+). Essential peptidyl-tRNA hydrolase component of the mitochondrial large ribosomal subunit. Acts as a codon-independent translation release factor that has lost all stop codon specificity and directs the termination of translation in mitochondrion, possibly in case of abortive elongation. May be involved in the hydrolysis of peptidyl-tRNAs that have been prematurely terminated and thus in the recycling of stalled mitochondrial ribosomes. The sequence is that of Large ribosomal subunit protein mL62 from Bos taurus (Bovine).